A 68-amino-acid polypeptide reads, in one-letter code: Conotoxin Pu5.5 (68 aa).

Residues Met-1 to Ala-22 form the signal peptide. Residues Arg-23 to Arg-49 constitute a propeptide that is removed on maturation.

It belongs to the conotoxin T superfamily. In terms of processing, contains 2 disulfide bonds that can be either 'C1-C3, C2-C4' or 'C1-C4, C2-C3', since these disulfide connectivities have been observed for conotoxins with cysteine framework V (for examples, see AC P0DQQ7 and AC P81755). Expressed by the venom duct.

Its subcellular location is the secreted. The polypeptide is Conotoxin Pu5.5 (Conus pulicarius (Flea-bitten cone)).